Consider the following 478-residue polypeptide: Ribosome biogenesis protein NOP53 (478 aa).

The segment covering 1-10 (MAAGGSGVGG) has biased composition (gly residues). The segment at 1–51 (MAAGGSGVGGKRSSKSDADSGFLGLRPTSVDPALRRRRRGPRNKKRGWRRL) is disordered. An N-acetylalanine modification is found at Ala2. The residue at position 29 (Ser29) is a Phosphoserine. Positions 35–49 (RRRRRGPRNKKRGWR) are enriched in basic residues. A phosphoserine mark is found at Ser93 and Ser305. Residues 148–431 (KEQLWEKLAK…SELTDSLRTL (284 aa)) are mediates interaction with CDKN2A/isoform tumor suppressor ARF. The tract at residues 181 to 478 (KPGPQDTVER…EKRAFREIQL (298 aa)) is mediates interaction with NF2. Residues 303–344 (EESDGEGEPGQGEGPEAGDAEVCPTPARLATTEKKTEQQRRR) form a disordered region. A compositionally biased stretch (basic and acidic residues) spans 333 to 342 (TTEKKTEQQR). The tract at residues 342-386 (RRREKAVHRLRVQQAALRAARLRHQELFRLRGIKAQVALRLAELA) is mediates interaction with human herpesvirus 8 protein ORF16. 2 nucleolar localization signal regions span residues 347–395 (AVHR…RQAR) and 396–478 (REAE…EIQL).

It belongs to the NOP53 family. In terms of assembly, homooligomer. Interacts with PTEN; regulates PTEN phosphorylation and increases its stability. Interacts with RPL11; retains RPL11 into the nucleolus. Interacts with CDKN2A/isoform tumor suppressor ARF; the interaction is direct and promotes ARF nucleoplasmic relocalization and ubiquitin-mediated proteasomal degradation. Interacts with NPM1; the interaction is direct and competitive with MYC. Interacts with NF2 (via FERM domain); the interaction is direct. Interacts with p53/TP53 (via the oligomerization region); the interaction is direct and may prevent the MDM2-mediated proteasomal degradation of p53/TP53. Interacts with RIGI; may regulate RIGI through USP15-mediated 'Lys-63'-linked deubiquitination. Interacts with UBTF. (Microbial infection) Interacts with herpes simplex virus 1 early proteins ICP22 and ICP0. As to quaternary structure, (Microbial infection) Interacts with Human herpesvirus 8 protein ORF16; may sequester ORF16 in host nucleolus and reduce its antiapoptotic activity. Post-translationally, ubiquitin-mediated proteasomal degradation is regulated by c-JUN. It is associated with relocalization to the nucleoplasm and decreased homooligomerization. In terms of processing, phosphorylated upon DNA damage probably by ATM and DNA-PK; may regulate NOP53 degradation. Expressed at high levels in heart and pancreas, moderate levels in placenta, liver, skeletal muscle, and kidney, and low levels in brain and lung.

It localises to the nucleus. It is found in the nucleolus. The protein localises to the nucleoplasm. In terms of biological role, nucleolar protein which is involved in the integration of the 5S RNP into the ribosomal large subunit during ribosome biogenesis. In ribosome biogenesis, may also play a role in rRNA transcription. Also functions as a nucleolar sensor that regulates the activation of p53/TP53 in response to ribosome biogenesis perturbation, DNA damage and other stress conditions. DNA damage or perturbation of ribosome biogenesis disrupt the interaction between NOP53 and RPL11 allowing RPL11 transport to the nucleoplasm where it can inhibit MDM2 and allow p53/TP53 activation. It may also positively regulate the function of p53/TP53 in cell cycle arrest and apoptosis through direct interaction, preventing its MDM2-dependent ubiquitin-mediated proteasomal degradation. Originally identified as a tumor suppressor, it may also play a role in cell proliferation and apoptosis by positively regulating the stability of PTEN, thereby antagonizing the PI3K-AKT/PKB signaling pathway. May also inhibit cell proliferation and increase apoptosis through its interaction with NF2. May negatively regulate NPM1 by regulating its nucleoplasmic localization, oligomerization and ubiquitin-mediated proteasomal degradation. Thereby, may prevent NPM1 interaction with MYC and negatively regulate transcription mediated by the MYC-NPM1 complex. May also regulate cellular aerobic respiration. In the cellular response to viral infection, may play a role in the attenuation of interferon-beta through the inhibition of RIGI. The polypeptide is Ribosome biogenesis protein NOP53 (Homo sapiens (Human)).